Consider the following 96-residue polypeptide: Co-chaperonin GroES (96 aa).

Belongs to the GroES chaperonin family. Heptamer of 7 subunits arranged in a ring. Interacts with the chaperonin GroEL.

Its subcellular location is the cytoplasm. Together with the chaperonin GroEL, plays an essential role in assisting protein folding. The GroEL-GroES system forms a nano-cage that allows encapsulation of the non-native substrate proteins and provides a physical environment optimized to promote and accelerate protein folding. GroES binds to the apical surface of the GroEL ring, thereby capping the opening of the GroEL channel. The sequence is that of Co-chaperonin GroES from Hydrogenovibrio crunogenus (strain DSM 25203 / XCL-2) (Thiomicrospira crunogena).